The following is a 476-amino-acid chain: Argininosuccinate lyase (476 aa).

The protein belongs to the lyase 1 family. Argininosuccinate lyase subfamily.

The protein resides in the cytoplasm. The enzyme catalyses 2-(N(omega)-L-arginino)succinate = fumarate + L-arginine. The protein operates within amino-acid biosynthesis; L-arginine biosynthesis; L-arginine from L-ornithine and carbamoyl phosphate: step 3/3. This Leptothrix cholodnii (strain ATCC 51168 / LMG 8142 / SP-6) (Leptothrix discophora (strain SP-6)) protein is Argininosuccinate lyase.